The primary structure comprises 274 residues: Transcription factor MYB32 (274 aa).

HTH myb-type domains follow at residues 9 to 61 (KDHT…INYL) and 62 to 116 (RPDL…KRKL). 2 consecutive DNA-binding regions (H-T-H motif) follow at residues 37–61 (WRSL…INYL) and 89–112 (WSLI…NTHV). The tract at residues 123 to 144 (PATHRPINETKTSQDSSDSSKT) is disordered.

Mostly expressed in roots, and, to a lower extent, in stems, flower buds, and siliques.

Its subcellular location is the nucleus. This Arabidopsis thaliana (Mouse-ear cress) protein is Transcription factor MYB32 (MYB32).